Here is a 224-residue protein sequence, read N- to C-terminus: uncharacterized protein (224 aa).

The next 4 helical transmembrane spans lie at 39–59, 70–90, 103–123, and 139–159; these read LICLIAGGVQVFMGGYIFYSI, YLSLSVVGFYACLTGLLILFA, VFVFLCNGLSRGIIYILIGAI, and MHIGLVCIAGGVVSIIEFLIT.

It is found in the membrane. This is an uncharacterized protein from Dictyostelium discoideum (Social amoeba).